A 2409-amino-acid polypeptide reads, in one-letter code: Reducing polyketide synthase FUB1 (2409 aa).

The span at 1–43 (MTLSNGSNGANGTSNGHGAHPSANGFHNAANGGANNGTPNGGA) shows a compositional bias: low complexity. Residues 1–49 (MTLSNGSNGANGTSNGHGAHPSANGFHNAANGGANNGTPNGGAEYNASL) form a disordered region. One can recognise a Ketosynthase family 3 (KS3) domain in the interval 57–479 (SSAIAVIGVS…GANAHAVLDD (423 aa)). Catalysis depends on for beta-ketoacyl synthase activity residues C230, H365, and H403. Positions 608–929 (TFIFTGQGAQ…FSAIKRKQDA (322 aa)) are malonyl-CoA:ACP transacylase (MAT) domain. S699 (for malonyltransferase activity) is an active-site residue. The tract at residues 994–1127 (LELLGVRDPR…GLVSTSYKRE (134 aa)) is N-terminal hotdog fold. A PKS/mFAS DH domain is found at 994–1307 (LELLGVRDPR…TVPLRGASDP (314 aa)). The dehydratase (DH) domain stretch occupies residues 995–1302 (ELLGVRDPRS…LEGCKTVPLR (308 aa)). H1026 functions as the Proton acceptor; for dehydratase activity in the catalytic mechanism. Residues 1155–1307 (LPSVDPTVFY…TVPLRGASDP (153 aa)) are C-terminal hotdog fold. D1220 serves as the catalytic Proton donor; for dehydratase activity. The interval 1713 to 2025 (GLLDTLEYLS…SGGHVGKIVL (313 aa)) is enoyl reductase (ER) domain. Positions 2049–2225 (ATYVLIGGLG…AATSINLSLV (177 aa)) are ketoreductase (KR) domain. A Carrier domain is found at 2328–2405 (EVYEIVLQQL…GFAKKVMAKS (78 aa)). At S2365 the chain carries O-(pantetheine 4'-phosphoryl)serine.

It functions in the pathway mycotoxin biosynthesis. Its function is as follows. Reducing polyketide synthase; part of the gene cluster that mediates the biosynthesis of fusaric acid, a mycotoxin with low to moderate toxicity to animals and humans, but with high phytotoxic properties. L-aspartate is suggested as fusaric acid amino acid precursor that is activated and further processed to O-acetyl-L-homoserine by cluster enzymes aspartate kinase FUB3 and homoserine O-acetyltransferase FUB5, as well as enzymes of the primary metabolism. The polyketide synthase (PKS) FUB1 generates the triketide trans-2-hexenal which is presumptively released by the hydrolase FUB4 and linked to the NRPS-bound amino acid precursor by NAD(P)-dependent dehydrogenase FUB6. FUB1, FUB4, and the non-canonical NRPS Fub8 may form an enzyme complex. Further processing of the NRPS-bound intermediate might be carried out by FUB6 and the sulfhydrylase FUB7, enabling a spontaneous electrocyclization to close the carbon backbone of fusaric acid. Dihydrofusaric acid is likely to be released via reduction by the thioester reductase (TR) domain of FUB8 whereupon the final oxidation to fusaric acid may (also) be performed by the FMN-dependent dehydrogenase FUB9. The sequence is that of Reducing polyketide synthase FUB1 from Gibberella moniliformis (strain M3125 / FGSC 7600) (Maize ear and stalk rot fungus).